Here is a 553-residue protein sequence, read N- to C-terminus: Ubiquitin carboxyl-terminal hydrolase 17-like protein 15 (553 aa).

In terms of domain architecture, USP spans 80–375; sequence AGLQNMGNTC…QAYVLFYIQK (296 aa). The active-site Nucleophile is the Cys-89. His-334 acts as the Proton acceptor in catalysis. 2 stretches are compositionally biased toward basic and acidic residues: residues 382–392 and 398–413; these read SESVSRGREPR and DTDRRATQGELKRDHP. Disordered stretches follow at residues 382–413 and 491–524; these read SESVSRGREPRALGAEDTDRRATQGELKRDHP and STTPTHQESMNTGTLASLRGRARRSKGKNKHSKR. Residues 496 to 505 show a composition bias toward polar residues; that stretch reads HQESMNTGTL. A compositionally biased stretch (basic residues) spans 510 to 524; that stretch reads GRARRSKGKNKHSKR.

It belongs to the peptidase C19 family. USP17 subfamily.

It is found in the nucleus. The protein resides in the endoplasmic reticulum. The catalysed reaction is Thiol-dependent hydrolysis of ester, thioester, amide, peptide and isopeptide bonds formed by the C-terminal Gly of ubiquitin (a 76-residue protein attached to proteins as an intracellular targeting signal).. In terms of biological role, deubiquitinating enzyme that removes conjugated ubiquitin from specific proteins to regulate different cellular processes that may include cell proliferation, progression through the cell cycle, apoptosis, cell migration, and the cellular response to viral infection. The polypeptide is Ubiquitin carboxyl-terminal hydrolase 17-like protein 15 (USP17L15) (Homo sapiens (Human)).